Reading from the N-terminus, the 88-residue chain is Small ribosomal subunit protein uS17 (88 aa).

Belongs to the universal ribosomal protein uS17 family. Part of the 30S ribosomal subunit.

In terms of biological role, one of the primary rRNA binding proteins, it binds specifically to the 5'-end of 16S ribosomal RNA. The polypeptide is Small ribosomal subunit protein uS17 (Methylorubrum extorquens (strain PA1) (Methylobacterium extorquens)).